The sequence spans 156 residues: ATP synthase subunit b (156 aa).

A helical transmembrane segment spans residues 11–31 (AIAFVLFVLFCMKYVWPPIMA).

This sequence belongs to the ATPase B chain family. As to quaternary structure, F-type ATPases have 2 components, F(1) - the catalytic core - and F(0) - the membrane proton channel. F(1) has five subunits: alpha(3), beta(3), gamma(1), delta(1), epsilon(1). F(0) has three main subunits: a(1), b(2) and c(10-14). The alpha and beta chains form an alternating ring which encloses part of the gamma chain. F(1) is attached to F(0) by a central stalk formed by the gamma and epsilon chains, while a peripheral stalk is formed by the delta and b chains.

Its subcellular location is the cell inner membrane. Its function is as follows. F(1)F(0) ATP synthase produces ATP from ADP in the presence of a proton or sodium gradient. F-type ATPases consist of two structural domains, F(1) containing the extramembraneous catalytic core and F(0) containing the membrane proton channel, linked together by a central stalk and a peripheral stalk. During catalysis, ATP synthesis in the catalytic domain of F(1) is coupled via a rotary mechanism of the central stalk subunits to proton translocation. Functionally, component of the F(0) channel, it forms part of the peripheral stalk, linking F(1) to F(0). The sequence is that of ATP synthase subunit b from Cronobacter sakazakii (strain ATCC BAA-894) (Enterobacter sakazakii).